Reading from the N-terminus, the 148-residue chain is uncharacterized protein (148 aa).

Residues 25 to 148 (LSIGLIFSLI…YSITNIFIYN (124 aa)) enclose the ABC transmembrane type-1 domain. Transmembrane regions (helical) follow at residues 26–46 (SIGL…PLII), 60–80 (IVII…STYI), and 127–147 (ITRV…IFIY).

The protein localises to the cell membrane. This is an uncharacterized protein from Staphylococcus epidermidis.